The following is a 67-amino-acid chain: Small ribosomal subunit protein eS31 (67 aa).

The Zn(2+) site is built by Cys31, Cys34, Cys49, and Cys52. The C4-type zinc finger occupies 31–52 (CPKCGAGVFMAEHLNRFACGKC).

This sequence belongs to the eukaryotic ribosomal protein eS31 family. Part of the 30S ribosomal subunit. It depends on Zn(2+) as a cofactor.

In Methanococcus maripaludis (strain C7 / ATCC BAA-1331), this protein is Small ribosomal subunit protein eS31.